The sequence spans 21 residues: Trypsin (21 aa).

The propeptide at 1 to 7 (FPIEEDK) is activation peptide. The region spanning 8–21 (IVGGYECPKHXVPW) is the Peptidase S1 domain.

Belongs to the peptidase S1 family.

It is found in the secreted. The protein localises to the extracellular space. The enzyme catalyses Preferential cleavage: Arg-|-Xaa, Lys-|-Xaa.. This is Trypsin from Protopterus aethiopicus (Marbled lungfish).